The sequence spans 266 residues: Methyl-coenzyme M reductase II subunit gamma (266 aa).

R123 is a binding site for coenzyme M.

It belongs to the methyl-coenzyme M reductase gamma subunit family. In terms of assembly, MCR is a hexamer of two alpha, two beta, and two gamma chains, forming a dimer of heterotrimers. It depends on coenzyme F430 as a cofactor.

The enzyme catalyses coenzyme B + methyl-coenzyme M = methane + coenzyme M-coenzyme B heterodisulfide. The protein operates within one-carbon metabolism; methyl-coenzyme M reduction; methane from methyl-coenzyme M: step 1/1. In terms of biological role, component of the methyl-coenzyme M reductase (MCR) I that catalyzes the reductive cleavage of methyl-coenzyme M (CoM-S-CH3 or 2-(methylthio)ethanesulfonate) using coenzyme B (CoB or 7-mercaptoheptanoylthreonine phosphate) as reductant which results in the production of methane and the mixed heterodisulfide of CoB and CoM (CoM-S-S-CoB). This is the final step in methanogenesis. This is Methyl-coenzyme M reductase II subunit gamma (mrtG) from Methanocaldococcus jannaschii (strain ATCC 43067 / DSM 2661 / JAL-1 / JCM 10045 / NBRC 100440) (Methanococcus jannaschii).